The following is a 938-amino-acid chain: Isoleucine--tRNA ligase (938 aa).

The 'HIGH' region motif lies at 58–68; it reads PYANGSIHIGH. Glutamate 561 provides a ligand contact to L-isoleucyl-5'-AMP. The short motif at 602–606 is the 'KMSKS' region element; sequence KMSKS. Lysine 605 is a binding site for ATP. The Zn(2+) site is built by cysteine 901, cysteine 904, cysteine 921, and cysteine 924.

The protein belongs to the class-I aminoacyl-tRNA synthetase family. IleS type 1 subfamily. Monomer. Zn(2+) serves as cofactor.

The protein localises to the cytoplasm. It carries out the reaction tRNA(Ile) + L-isoleucine + ATP = L-isoleucyl-tRNA(Ile) + AMP + diphosphate. In terms of biological role, catalyzes the attachment of isoleucine to tRNA(Ile). As IleRS can inadvertently accommodate and process structurally similar amino acids such as valine, to avoid such errors it has two additional distinct tRNA(Ile)-dependent editing activities. One activity is designated as 'pretransfer' editing and involves the hydrolysis of activated Val-AMP. The other activity is designated 'posttransfer' editing and involves deacylation of mischarged Val-tRNA(Ile). This Sodalis glossinidius (strain morsitans) protein is Isoleucine--tRNA ligase.